A 189-amino-acid chain; its full sequence is Large ribosomal subunit protein uL6 (189 aa).

Belongs to the universal ribosomal protein uL6 family. In terms of assembly, part of the 50S ribosomal subunit.

Its function is as follows. This protein binds to the 23S rRNA, and is important in its secondary structure. It is located near the subunit interface in the base of the L7/L12 stalk, and near the tRNA binding site of the peptidyltransferase center. In Bacteroides thetaiotaomicron (strain ATCC 29148 / DSM 2079 / JCM 5827 / CCUG 10774 / NCTC 10582 / VPI-5482 / E50), this protein is Large ribosomal subunit protein uL6.